A 138-amino-acid chain; its full sequence is Nanos homolog 2 (138 aa).

Residues 31–55 (ETQEIEEPSPGPPLGQDQGLGAPGA) are disordered. The Nanos-type zinc finger occupies 62-116 (LCNFCKHNGESRHVYSSHQLKTPDGVVVCPILRHYVCPVCGATGDQAHTLKYCPL). Residues Cys-63, Cys-66, His-79, Cys-90, Cys-98, Cys-101, His-109, and Cys-114 each coordinate Zn(2+). Short sequence motifs (C2HC) lie at residues 63–90 (CNFC…VVVC) and 98–114 (CPVC…LKYC).

The protein belongs to the nanos family. Interacts with CNOT1, CNOT3, CNOT6L, CNOT7 and CNOT9. In terms of tissue distribution, testis and ovary. Expression found in several spermatogenic stages: in cells on the periphery of the tubules which could correspond to spermatogonia, in spermatocytes and in round spermatids (at protein level).

The protein localises to the cytoplasm. The protein resides in the P-body. It localises to the perinuclear region. Plays a key role in the sexual differentiation of germ cells by promoting the male fate but suppressing the female fate. Represses the female fate pathways by suppressing meiosis, which in turn results in the promotion of the male fate. Maintains the suppression of meiosis by preventing STRA8 expression, which is required for premeiotic DNA replication, after CYP26B1 is decreased. Regulates the localization of the CCR4-NOT deadenylation complex to P-bodies and plays a role in recruiting the complex to trigger the degradation of mRNAs involved in meiosis. Required for the maintenance of the spermatogonial stem cell population. Not essential for the assembly of P-bodies but is required for the maintenance of their normal state. In Homo sapiens (Human), this protein is Nanos homolog 2 (NANOS2).